Reading from the N-terminus, the 258-residue chain is Hydroxyacylglutathione hydrolase (258 aa).

The Zn(2+) site is built by histidine 55, histidine 57, aspartate 59, histidine 60, histidine 115, aspartate 132, and histidine 170.

It belongs to the metallo-beta-lactamase superfamily. Glyoxalase II family. As to quaternary structure, monomer. The cofactor is Zn(2+).

It carries out the reaction an S-(2-hydroxyacyl)glutathione + H2O = a 2-hydroxy carboxylate + glutathione + H(+). It functions in the pathway secondary metabolite metabolism; methylglyoxal degradation; (R)-lactate from methylglyoxal: step 2/2. In terms of biological role, thiolesterase that catalyzes the hydrolysis of S-D-lactoyl-glutathione to form glutathione and D-lactic acid. This is Hydroxyacylglutathione hydrolase from Shewanella denitrificans (strain OS217 / ATCC BAA-1090 / DSM 15013).